Consider the following 165-residue polypeptide: MSTVASVKDFVSSFMLTELFKGMALTGKYMFSRKITVQFPEEKTPLSPRFRGLHALRRYDNGEERCIACKLCEAVCPALAITIESEVRDDGSRRTSRYDIDLTKCIFCGFCEEACPVDAIVETHIFEYHGEKRGDLYFTKEMLLAVGDRYEAEIAANKAADAKYR.

4Fe-4S ferredoxin-type domains are found at residues 57-86 (RRYD…IESE) and 96-125 (SRYD…ETHI). 8 residues coordinate [4Fe-4S] cluster: cysteine 66, cysteine 69, cysteine 72, cysteine 76, cysteine 105, cysteine 108, cysteine 111, and cysteine 115.

This sequence belongs to the complex I 23 kDa subunit family. NDH-1 is composed of 14 different subunits. Subunits NuoA, H, J, K, L, M, N constitute the membrane sector of the complex. [4Fe-4S] cluster is required as a cofactor.

It is found in the cell inner membrane. It catalyses the reaction a quinone + NADH + 5 H(+)(in) = a quinol + NAD(+) + 4 H(+)(out). Its function is as follows. NDH-1 shuttles electrons from NADH, via FMN and iron-sulfur (Fe-S) centers, to quinones in the respiratory chain. The immediate electron acceptor for the enzyme in this species is believed to be ubiquinone. Couples the redox reaction to proton translocation (for every two electrons transferred, four hydrogen ions are translocated across the cytoplasmic membrane), and thus conserves the redox energy in a proton gradient. The chain is NADH-quinone oxidoreductase subunit I from Polaromonas sp. (strain JS666 / ATCC BAA-500).